A 311-amino-acid polypeptide reads, in one-letter code: Ornithine carbamoyltransferase (311 aa).

Carbamoyl phosphate is bound by residues 57 to 60, Q84, R108, and 135 to 138; these read STRT and HPCQ. Residues N166, D230, and 234–235 contribute to the L-ornithine site; that span reads SM. Carbamoyl phosphate contacts are provided by residues 270 to 271 and R298; that span reads CL.

Belongs to the aspartate/ornithine carbamoyltransferase superfamily. OTCase family.

The protein resides in the cytoplasm. The catalysed reaction is carbamoyl phosphate + L-ornithine = L-citrulline + phosphate + H(+). It functions in the pathway amino-acid biosynthesis; L-arginine biosynthesis; L-arginine from L-ornithine and carbamoyl phosphate: step 1/3. Functionally, reversibly catalyzes the transfer of the carbamoyl group from carbamoyl phosphate (CP) to the N(epsilon) atom of ornithine (ORN) to produce L-citrulline. The chain is Ornithine carbamoyltransferase from Carboxydothermus hydrogenoformans (strain ATCC BAA-161 / DSM 6008 / Z-2901).